A 472-amino-acid polypeptide reads, in one-letter code: MDYLPIFTKLENRPCLVVGGGSIACRKIHLLLKAGADVTVCALEFNPSLLKQAANKELKILEQAFTEELLENKWLVIAATNKKQVNEHIATAAHAKQLLVNVVGQADISSFILPSIVDRSPLVVAISSGGKAPVLARLIRERLETLLPMHLGRLAAISAQFRHRVKEVIKVAPLRRRYWEKLFGNGMLANLLQKGQTEKAIALMETSLSEDITQGDVALVGAGPGDPSLLTLKALQLMQQADVVLYDRLVSSDILDLVRRDADLISVGKAAGNHEVEQSRTNQMLVEFAREGKKVVRLKGGDSFIFGRGGEELEELVEAGIAFQVVPGITAASGCSAYAGIPLTHRDFAQSVTFVTGHRKTDGEELNWQALAAPNQTLVVYMGLIQSQEIQTQLLSHGRAPETPVALVNKGTTSDQHVVIGQLSELEQLGGGLQGPTLMIIGEVVNLADKLAWYQSDNKPPLSRDPFLVNLA.

Positions 1–204 (MDYLPIFTKL…GQTEKAIALM (204 aa)) are precorrin-2 dehydrogenase /sirohydrochlorin ferrochelatase. NAD(+) is bound by residues 22–23 (SI) and 43–44 (LE). Phosphoserine is present on serine 128. Positions 215–472 (GDVALVGAGP…SRDPFLVNLA (258 aa)) are uroporphyrinogen-III C-methyltransferase. Proline 224 lines the S-adenosyl-L-methionine pocket. Residue aspartate 247 is the Proton acceptor of the active site. Lysine 269 functions as the Proton donor in the catalytic mechanism. S-adenosyl-L-methionine is bound by residues 300 to 302 (GGD), isoleucine 305, 330 to 331 (TA), methionine 382, and glycine 411.

This sequence in the N-terminal section; belongs to the precorrin-2 dehydrogenase / sirohydrochlorin ferrochelatase family. In the C-terminal section; belongs to the precorrin methyltransferase family.

It catalyses the reaction uroporphyrinogen III + 2 S-adenosyl-L-methionine = precorrin-2 + 2 S-adenosyl-L-homocysteine + H(+). The catalysed reaction is precorrin-2 + NAD(+) = sirohydrochlorin + NADH + 2 H(+). It carries out the reaction siroheme + 2 H(+) = sirohydrochlorin + Fe(2+). It functions in the pathway cofactor biosynthesis; adenosylcobalamin biosynthesis; precorrin-2 from uroporphyrinogen III: step 1/1. It participates in cofactor biosynthesis; adenosylcobalamin biosynthesis; sirohydrochlorin from precorrin-2: step 1/1. Its pathway is porphyrin-containing compound metabolism; siroheme biosynthesis; precorrin-2 from uroporphyrinogen III: step 1/1. The protein operates within porphyrin-containing compound metabolism; siroheme biosynthesis; siroheme from sirohydrochlorin: step 1/1. It functions in the pathway porphyrin-containing compound metabolism; siroheme biosynthesis; sirohydrochlorin from precorrin-2: step 1/1. Functionally, multifunctional enzyme that catalyzes the SAM-dependent methylations of uroporphyrinogen III at position C-2 and C-7 to form precorrin-2 via precorrin-1. Then it catalyzes the NAD-dependent ring dehydrogenation of precorrin-2 to yield sirohydrochlorin. Finally, it catalyzes the ferrochelation of sirohydrochlorin to yield siroheme. This Psychromonas ingrahamii (strain DSM 17664 / CCUG 51855 / 37) protein is Siroheme synthase.